A 623-amino-acid polypeptide reads, in one-letter code: Glutathione import ATP-binding protein GsiA (623 aa).

ABC transporter domains follow at residues 15–269 (VENL…RALL) and 314–564 (LRVR…RKLL). ATP contacts are provided by residues 49-56 (GESGSGKS) and 357-364 (GESGSGKS).

The protein belongs to the ABC transporter superfamily. Glutathione importer (TC 3.A.1.5.11) family. As to quaternary structure, the complex is composed of two ATP-binding proteins (GsiA), two transmembrane proteins (GsiC and GsiD) and a solute-binding protein (GsiB).

It localises to the cell inner membrane. The enzyme catalyses glutathione(out) + ATP + H2O = glutathione(in) + ADP + phosphate + H(+). In terms of biological role, part of the ABC transporter complex GsiABCD involved in glutathione import. Responsible for energy coupling to the transport system. In Shigella sonnei (strain Ss046), this protein is Glutathione import ATP-binding protein GsiA.